The chain runs to 417 residues: uncharacterized protein (417 aa).

The tract at residues 1–24 (MSQPPINPLGQPQVPAAASPSGQP) is disordered. A run of 4 helical transmembrane segments spans residues 54–74 (VYDTGIIALAAIAILSILLTA), 79–99 (LMLYALAPALALGALGVTLLI), 117–137 (AIVVPIIVLAIAAGLIAGAFV), and 143–163 (MLVFANPMFVMGLITVGLYFM). Residues 211-228 (DLSASARMEEHEASQRQD) are compositionally biased toward basic and acidic residues. Disordered stretches follow at residues 211 to 283 (DLSA…FKDD) and 308 to 417 (IMPA…RKNK). Residues 312 to 322 (SSRSPNFSTGT) are compositionally biased toward polar residues. The segment covering 336–347 (EPSIPRVSSSSR) has biased composition (low complexity). Residues 391-401 (STANLSPSNPF) are compositionally biased toward polar residues.

This sequence belongs to the chlamydial CPn_0443/CT_005/TC_0273 family.

It localises to the cell membrane. This is an uncharacterized protein from Chlamydia pneumoniae (Chlamydophila pneumoniae).